A 237-amino-acid polypeptide reads, in one-letter code: Ras-related protein Rab-23 (237 aa).

Residue Ala-19 participates in GDP binding. GTP is bound by residues Val-20, Gly-21, Lys-22, Ser-23, and Ser-24. Gly-21, Lys-22, Ser-23, Ser-24, and Asp-37 together coordinate GDP. Mg(2+) is bound at residue Ser-23. Residues 28–46 (RYCKGIFTKDYKKTIGVDF) carry the Switch 1 motif. Residue Tyr-38 participates in GTP binding. Lys-40 lines the GDP pocket. Thr-41 contributes to the GTP binding site. Mg(2+) contacts are provided by Thr-41 and Asp-64. The short motif at 65 to 84 (TAGQEEFDAITKAYYRGAQA) is the Switch 2 element. Residues Gly-67, Asn-121, Lys-122, Asp-124, Ser-151, Val-152, and Lys-153 each coordinate GTP. 3 residues coordinate GDP: Asn-121, Lys-122, and Asp-124. GDP is bound by residues Val-152 and Lys-153. Phosphoserine occurs at positions 186 and 187. Positions 204-237 (QNSSSLNGGDVINLRPNKQRTKRTRNPFSSCSVP) are disordered. At Cys-234 the chain carries Cysteine methyl ester. Cys-234 carries S-geranylgeranyl cysteine lipidation. The propeptide at 235–237 (SVP) is removed in mature form.

Belongs to the small GTPase superfamily. Rab family. In terms of assembly, interacts with SUFU. It depends on Mg(2+) as a cofactor. As to expression, detected in brain neurons (at protein level). Forebrain and midbrain.

It localises to the cell membrane. The protein localises to the cytoplasm. Its subcellular location is the endosome membrane. It is found in the cytoplasmic vesicle. The protein resides in the autophagosome. It localises to the phagosome. The protein localises to the phagosome membrane. The catalysed reaction is GTP + H2O = GDP + phosphate + H(+). Regulated by guanine nucleotide exchange factors (GEFs) which promote the exchange of bound GDP for free GTP. Regulated by GTPase activating proteins (GAPs) which increase the GTP hydrolysis activity. Inhibited by GDP dissociation inhibitors (GDIs). In terms of biological role, the small GTPases Rab are key regulators of intracellular membrane trafficking, from the formation of transport vesicles to their fusion with membranes. Rabs cycle between an inactive GDP-bound form and an active GTP-bound form that is able to recruit to membranes different set of downstream effectors directly responsible for vesicle formation, movement, tethering and fusion. Plays a role in autophagic vacuole assembly, and mediates defense against pathogens, such as S.aureus, by promoting their capture by autophagosomes that then merge with lysosomes. Together with SUFU, prevents nuclear import of GLI1, and thereby inhibits GLI1 transcription factor activity. Regulates GLI1 in differentiating chondrocytes. Likewise, regulates GLI3 proteolytic processing and modulates GLI2 and GLI3 transcription factor activity. The polypeptide is Ras-related protein Rab-23 (Mus musculus (Mouse)).